Here is a 141-residue protein sequence, read N- to C-terminus: Ubiquitin-like protein ATG12 (141 aa).

Positions 24–54 are disordered; it reads LELSPETAIPEPPSSVAVSPGTEEPPGDTKK. Residue Gly-141 forms a Glycyl lysine isopeptide (Gly-Lys) (interchain with K-? in acceptor protein) linkage.

The protein belongs to the ATG12 family. Forms a conjugate with ATG5. Part of the minor complex composed of 4 sets of ATG12-ATG5 and ATG16L1 (400 kDa); this complex interacts with ATG3 leading to disruption of ATG7 interaction and promotion of ATG8-like proteins lipidation. Forms an 800-kDa complex composed of ATG12-ATG5 and ATG16L2. Interacts with DHX58/RIG-1, IFIH1/MDA5 and MAVS/IPS-1 in monomeric form as well as in ATG12-ATG5 conjugate. The interaction with MAVS is further enhanced upon vesicular stomatitis virus (VSV) infection. Interacts with ATG3; this interaction is essential for phosphatidylethanolamine (PE)-conjugated ATG8-like proteins formation. Interacts with ATG7. Interacts with ATG10. The ATG12-ATG5 conjugate interacts with RAB33A; this interaction is bridged by ATG16L1 and promotes ATG12-ATG5-ATG16L1 complex recruitment to phagophores. Interacts with TECPR1. Interacts with SH3BGRL. The ATG12-ATG5 conjugate interacts with PDCD6IP (via the BRO1 domain); this interaction is bridged by ATG12 and promotes multiple PDCD6IP-mediated functions such as endolysosomal trafficking, macroautophagy and exosome biogenesis. In terms of processing, acetylated by EP300.

It localises to the cytoplasm. It is found in the preautophagosomal structure membrane. Its function is as follows. Ubiquitin-like protein involved in autophagy vesicles formation. Conjugation with ATG5 through a ubiquitin-like conjugating system involving also ATG7 as an E1-like activating enzyme and ATG10 as an E2-like conjugating enzyme, is essential for its function. The ATG12-ATG5 conjugate acts as an E3-like enzyme which is required for lipidation of ATG8 family proteins and their association to the vesicle membranes. The ATG12-ATG5 conjugate also negatively regulates the innate antiviral immune response by blocking the type I IFN production pathway through direct association with RARRES3 and MAVS. Also plays a role in translation or delivery of incoming viral RNA to the translation apparatus. As part of the ATG8 conjugation system with ATG5 and ATG16L1, required for recruitment of LRRK2 to stressed lysosomes and induction of LRRK2 kinase activity in response to lysosomal stress. This is Ubiquitin-like protein ATG12 from Rattus norvegicus (Rat).